The sequence spans 571 residues: Phosphomethylpyrimidine synthase (571 aa).

Residues Asn201, Met230, Tyr259, His295, 315-317 (SRG), 356-359 (DALR), and Glu395 each bind substrate. His399 serves as a coordination point for Zn(2+). Tyr422 contacts substrate. His463 contributes to the Zn(2+) binding site. Residues Cys545, Cys548, and Cys553 each contribute to the [4Fe-4S] cluster site.

This sequence belongs to the ThiC family. [4Fe-4S] cluster serves as cofactor.

The enzyme catalyses 5-amino-1-(5-phospho-beta-D-ribosyl)imidazole + S-adenosyl-L-methionine = 4-amino-2-methyl-5-(phosphooxymethyl)pyrimidine + CO + 5'-deoxyadenosine + formate + L-methionine + 3 H(+). It participates in cofactor biosynthesis; thiamine diphosphate biosynthesis. Catalyzes the synthesis of the hydroxymethylpyrimidine phosphate (HMP-P) moiety of thiamine from aminoimidazole ribotide (AIR) in a radical S-adenosyl-L-methionine (SAM)-dependent reaction. The protein is Phosphomethylpyrimidine synthase of Chlorobium phaeovibrioides (strain DSM 265 / 1930) (Prosthecochloris vibrioformis (strain DSM 265)).